Here is a 232-residue protein sequence, read N- to C-terminus: Ashwin (232 aa).

Basic and acidic residues-rich tracts occupy residues D64–R97 and K116–R127. Residues D64–P232 form a disordered region. Polar residues predominate over residues P130–R140. S143 is modified (phosphoserine). Residues D144–S156 are compositionally biased toward low complexity. Residues K163–H179 are compositionally biased toward basic and acidic residues. Phosphoserine occurs at positions 182, 189, and 193. At T198 the chain carries Phosphothreonine.

It belongs to the ashwin family. As to quaternary structure, component of the tRNA-splicing ligase complex.

The protein localises to the nucleus. This chain is Ashwin, found in Bos taurus (Bovine).